A 128-amino-acid polypeptide reads, in one-letter code: Gastrotropin (128 aa).

Alanine 2 is modified (N-acetylalanine).

The protein belongs to the calycin superfamily. Fatty-acid binding protein (FABP) family.

Its subcellular location is the cytoplasm. The protein localises to the membrane. Its function is as follows. Binds to bile acids and is involved in enterohepatic bile acid metabolism. Required for efficient apical to basolateral transport of conjugated bile acids in ileal enterocytes. Stimulates gastric acid and pepsinogen secretion. The chain is Gastrotropin (FABP6) from Bos taurus (Bovine).